A 549-amino-acid chain; its full sequence is Siroheme synthase (549 aa).

Residues M1–L203 form a precorrin-2 dehydrogenase /sirohydrochlorin ferrochelatase region. Residues D22 to V23 and P43 to S44 contribute to the NAD(+) site. S128 is modified (phosphoserine). Residues G247–G549 are uroporphyrinogen-III C-methyltransferase. P256 contributes to the S-adenosyl-L-methionine binding site. D279 (proton acceptor) is an active-site residue. The active-site Proton donor is the K301. S-adenosyl-L-methionine-binding positions include G332–D334, I337, T362–A363, M414, and A443.

It in the N-terminal section; belongs to the precorrin-2 dehydrogenase / sirohydrochlorin ferrochelatase family. This sequence in the C-terminal section; belongs to the precorrin methyltransferase family.

The enzyme catalyses uroporphyrinogen III + 2 S-adenosyl-L-methionine = precorrin-2 + 2 S-adenosyl-L-homocysteine + H(+). It catalyses the reaction precorrin-2 + NAD(+) = sirohydrochlorin + NADH + 2 H(+). It carries out the reaction siroheme + 2 H(+) = sirohydrochlorin + Fe(2+). It functions in the pathway cofactor biosynthesis; adenosylcobalamin biosynthesis; precorrin-2 from uroporphyrinogen III: step 1/1. It participates in cofactor biosynthesis; adenosylcobalamin biosynthesis; sirohydrochlorin from precorrin-2: step 1/1. The protein operates within porphyrin-containing compound metabolism; siroheme biosynthesis; precorrin-2 from uroporphyrinogen III: step 1/1. Its pathway is porphyrin-containing compound metabolism; siroheme biosynthesis; siroheme from sirohydrochlorin: step 1/1. It functions in the pathway porphyrin-containing compound metabolism; siroheme biosynthesis; sirohydrochlorin from precorrin-2: step 1/1. Functionally, multifunctional enzyme that catalyzes the SAM-dependent methylations of uroporphyrinogen III at position C-2 and C-7 to form precorrin-2 via precorrin-1. Then it catalyzes the NAD-dependent ring dehydrogenation of precorrin-2 to yield sirohydrochlorin. Finally, it catalyzes the ferrochelation of sirohydrochlorin to yield siroheme. In Psychrobacter arcticus (strain DSM 17307 / VKM B-2377 / 273-4), this protein is Siroheme synthase.